The primary structure comprises 463 residues: Serine/threonine-protein kinase tricornered (463 aa).

In terms of domain architecture, Protein kinase spans 93–394 (FEALKVIGRG…LEDLKSVPFF (302 aa)). ATP is bound by residues 99-107 (IGRGAFGEV) and Lys122. Residues 119-180 (YAMKVLRKAD…EFLPGGDMMT (62 aa)) form an interaction with mats and Mob1 region. Catalysis depends on Asp216, which acts as the Proton acceptor. Phosphoserine is present on Ser292. The AGC-kinase C-terminal domain occupies 395-463 (RGVDWEHIRE…YKRFEVRNLE (69 aa)). Thr453 bears the Phosphothreonine mark.

Belongs to the protein kinase superfamily. AGC Ser/Thr protein kinase family. Interacts with, and is activated by, Mob1. Mg(2+) is required as a cofactor. In terms of tissue distribution, expressed in the peripheral and central nervous system (at protein level). Expressed in the wing imaginal disk.

It localises to the cytoplasm. It is found in the nucleus. The catalysed reaction is L-seryl-[protein] + ATP = O-phospho-L-seryl-[protein] + ADP + H(+). It catalyses the reaction L-threonyl-[protein] + ATP = O-phospho-L-threonyl-[protein] + ADP + H(+). Activated by fry. Its function is as follows. Serine/threonine-protein kinase involved in controlling cell structure and proliferation of a variety of polarized outgrowths including epidermal hairs, bristles, arista laterals, and dendrites. Together with fry, maintains the integrity of epidermal hairs and is an essential component of the signaling pathway regulating dendritic branching of sensory neurons. Reduces neurite outgrowth by phosphorylating pav, thereby inhibiting its function in microtubule-microtubule sliding. In Drosophila melanogaster (Fruit fly), this protein is Serine/threonine-protein kinase tricornered.